The sequence spans 220 residues: Ras-related protein Rab-11B (220 aa).

18–25 (GDSGVGKS) is a binding site for GTP. Residues 40–48 (KLSTIGVEF) carry the Effector region motif. GTP contacts are provided by residues 66 to 70 (DTAGQ) and 124 to 127 (NKSD). 2 S-geranylgeranyl cysteine lipidation sites follow: cysteine 219 and cysteine 220.

It belongs to the small GTPase superfamily. Rab family.

Its subcellular location is the cell membrane. The protein is Ras-related protein Rab-11B (rab11B) of Dictyostelium discoideum (Social amoeba).